We begin with the raw amino-acid sequence, 152 residues long: Small ribosomal subunit protein uS19 (152 aa).

The protein belongs to the universal ribosomal protein uS19 family.

In terms of biological role, protein S19 forms a complex with S13 that binds strongly to the 16S ribosomal RNA. The sequence is that of Small ribosomal subunit protein uS19 (rps19) from Methanocaldococcus jannaschii (strain ATCC 43067 / DSM 2661 / JAL-1 / JCM 10045 / NBRC 100440) (Methanococcus jannaschii).